A 603-amino-acid polypeptide reads, in one-letter code: Elongation factor 4 (603 aa).

Positions Ser-7 to Glu-189 constitute a tr-type G domain. GTP-binding positions include Asp-19–Thr-24 and Asn-136–Asp-139.

This sequence belongs to the TRAFAC class translation factor GTPase superfamily. Classic translation factor GTPase family. LepA subfamily.

It localises to the cell inner membrane. The enzyme catalyses GTP + H2O = GDP + phosphate + H(+). Its function is as follows. Required for accurate and efficient protein synthesis under certain stress conditions. May act as a fidelity factor of the translation reaction, by catalyzing a one-codon backward translocation of tRNAs on improperly translocated ribosomes. Back-translocation proceeds from a post-translocation (POST) complex to a pre-translocation (PRE) complex, thus giving elongation factor G a second chance to translocate the tRNAs correctly. Binds to ribosomes in a GTP-dependent manner. The chain is Elongation factor 4 from Acaryochloris marina (strain MBIC 11017).